A 429-amino-acid chain; its full sequence is Endoglucanase type C (429 aa).

An N-terminal signal peptide occupies residues 1–18 (MKSLSLILSALAVQVAVA). Pyrrolidone carboxylic acid is present on Gln-19. Intrachain disulfides connect Cys-36-Cys-42, Cys-66-Cys-88, Cys-78-Cys-84, Cys-156-Cys-383, Cys-190-Cys-213, Cys-194-Cys-212, Cys-233-Cys-252, Cys-241-Cys-246, and Cys-257-Cys-333. Residue Asn-74 is glycosylated (N-linked (GlcNAc...) asparagine). Catalysis depends on Glu-215, which acts as the Nucleophile. The active-site Proton donor is the Glu-220. Asn-265 and Asn-318 each carry an N-linked (GlcNAc...) asparagine glycan.

Belongs to the glycosyl hydrolase 7 (cellulase C) family.

The enzyme catalyses Endohydrolysis of (1-&gt;4)-beta-D-glucosidic linkages in cellulose, lichenin and cereal beta-D-glucans.. This is Endoglucanase type C from Fusarium oxysporum (Fusarium vascular wilt).